The chain runs to 648 residues: Macrolide export ATP-binding/permease protein MacB (648 aa).

In terms of domain architecture, ABC transporter spans 5–243 (LELKDIRRSY…TGGTEPVVNT (239 aa)). 41–48 (GASGSGKS) contributes to the ATP binding site. The next 4 membrane-spanning stretches (helical) occupy residues 273–293 (LLTMLGIIIGIASVVSIVVVG), 523–543 (LFLTLVAVISLVVGGIGVMNI), 576–596 (AVLVCLVGGALGITLSLLIAF), and 611–631 (PLALLLAFLCSTVTGILFGWL).

This sequence belongs to the ABC transporter superfamily. Macrolide exporter (TC 3.A.1.122) family. As to quaternary structure, homodimer. Part of the tripartite efflux system MacAB-TolC, which is composed of an inner membrane transporter, MacB, a periplasmic membrane fusion protein, MacA, and an outer membrane component, TolC. The complex forms a large protein conduit and can translocate molecules across both the inner and outer membranes. Interacts with MacA.

It is found in the cell inner membrane. Part of the tripartite efflux system MacAB-TolC. MacB is a non-canonical ABC transporter that contains transmembrane domains (TMD), which form a pore in the inner membrane, and an ATP-binding domain (NBD), which is responsible for energy generation. Confers resistance against macrolides. The polypeptide is Macrolide export ATP-binding/permease protein MacB (Escherichia coli O6:K15:H31 (strain 536 / UPEC)).